We begin with the raw amino-acid sequence, 213 residues long: Nucleoside triphosphate pyrophosphatase (213 aa).

Aspartate 79 serves as the catalytic Proton acceptor.

This sequence belongs to the Maf family. A divalent metal cation is required as a cofactor.

The protein resides in the cytoplasm. The enzyme catalyses a ribonucleoside 5'-triphosphate + H2O = a ribonucleoside 5'-phosphate + diphosphate + H(+). It catalyses the reaction a 2'-deoxyribonucleoside 5'-triphosphate + H2O = a 2'-deoxyribonucleoside 5'-phosphate + diphosphate + H(+). Its function is as follows. Nucleoside triphosphate pyrophosphatase. May have a dual role in cell division arrest and in preventing the incorporation of modified nucleotides into cellular nucleic acids. The protein is Nucleoside triphosphate pyrophosphatase of Rhodococcus erythropolis (strain PR4 / NBRC 100887).